The chain runs to 225 residues: UPF0758 protein NMCC_1157 (225 aa).

Residues 102–224 (VLSDPDTVAD…VRSFRQLGLM (123 aa)) enclose the MPN domain. 3 residues coordinate Zn(2+): histidine 173, histidine 175, and aspartate 186. Residues 173–186 (HNHPGGSPEPSQED) carry the JAMM motif motif.

This sequence belongs to the UPF0758 family.

The protein is UPF0758 protein NMCC_1157 of Neisseria meningitidis serogroup C (strain 053442).